The following is a 140-amino-acid chain: Large-conductance mechanosensitive channel (140 aa).

The next 2 membrane-spanning stretches (helical) occupy residues 14 to 34 (VMDLAVGVIIGGAFATITGSL) and 85 to 105 (GAFVTAVINFLILAFIIFLLV).

It belongs to the MscL family. Homopentamer.

It localises to the cell inner membrane. Its function is as follows. Channel that opens in response to stretch forces in the membrane lipid bilayer. May participate in the regulation of osmotic pressure changes within the cell. The protein is Large-conductance mechanosensitive channel of Sphingopyxis alaskensis (strain DSM 13593 / LMG 18877 / RB2256) (Sphingomonas alaskensis).